The sequence spans 834 residues: WPP domain-associated protein (834 aa).

Coiled-coil stretches lie at residues 410–456, 574–700, and 792–812; these read SFGN…RLQH, SLDT…VLAI, and AEAE…LVEK.

Interacts with MAF1. As to expression, expressed in seedlings, leaves and fruits.

Its subcellular location is the golgi apparatus. The protein localises to the cytoplasm. The sequence is that of WPP domain-associated protein (WAP) from Solanum lycopersicum (Tomato).